A 47-amino-acid chain; its full sequence is Delta-actitoxin-Ael1b (47 aa).

Intrachain disulfides connect Cys4–Cys44, Cys6–Cys34, and Cys27–Cys45.

This sequence belongs to the sea anemone sodium channel inhibitory toxin family. Type I subfamily.

Its subcellular location is the secreted. The protein localises to the nematocyst. Functionally, produces a positive inotropic effect in mammalian heart muscle. Modifies current passing through the fast sodium channel (Nav) in neuroblastoma cells, leading to delayed and incomplete inactivation. Paralyzes the shore crab (C.maenas) by tetanic contractions after intramuscular injection. The protein is Delta-actitoxin-Ael1b of Anthopleura elegantissima (Green aggregating anemone).